The primary structure comprises 119 residues: MICOS complex subunit MIC13 (119 aa).

The Mitochondrial matrix portion of the chain corresponds to 1-7; the sequence is MVARVWS. Residues 8–26 traverse the membrane as a helical segment; sequence LMRFLIKGSVAGGAVYLVY. The Mitochondrial intermembrane portion of the chain corresponds to 27–119; it reads DQELLGPSDK…GWEYLKEHSK (93 aa).

The protein belongs to the MICOS complex subunit Mic13 family. As to quaternary structure, component of the mitochondrial contact site and cristae organizing system (MICOS) complex, composed of at least MICOS10/MIC10, CHCHD3/MIC19, CHCHD6/MIC25, APOO/MIC26, MICOS13/MIC13, APOOL/MIC27 and IMMT/MIC60. The MICOS complex associates with mitochondrial outer membrane proteins SAMM50, MTX1 and MTX2 (together described as components of the mitochondrial outer membrane sorting assembly machinery (SAM) complex) and DNAJC11, mitochondrial inner membrane protein TMEM11 and with HSPA9. The MICOS and SAM complexes together with DNAJC11 are part of a large protein complex spanning both membranes termed the mitochondrial intermembrane space bridging (MIB) complex.

It is found in the mitochondrion inner membrane. Component of the MICOS complex, a large protein complex of the mitochondrial inner membrane that plays crucial roles in the maintenance of crista junctions, inner membrane architecture, and formation of contact sites to the outer membrane. Constituent of mature MICOS complex, it is required for the formation of cristae junction (CJ) and maintenance of cristae morphology. Required for the incorporation of MICOS10/MIC10 into the MICOS complex. The protein is MICOS complex subunit MIC13 (Micos13) of Mus musculus (Mouse).